A 130-amino-acid polypeptide reads, in one-letter code: Small ribosomal subunit protein uS9 (130 aa).

It belongs to the universal ribosomal protein uS9 family.

The polypeptide is Small ribosomal subunit protein uS9 (Cupriavidus metallidurans (strain ATCC 43123 / DSM 2839 / NBRC 102507 / CH34) (Ralstonia metallidurans)).